Reading from the N-terminus, the 195-residue chain is Small ribosomal subunit protein uS7 (195 aa).

This sequence belongs to the universal ribosomal protein uS7 family. Part of the 30S ribosomal subunit.

In terms of biological role, one of the primary rRNA binding proteins, it binds directly to 16S rRNA where it nucleates assembly of the head domain of the 30S subunit. Is located at the subunit interface close to the decoding center. The protein is Small ribosomal subunit protein uS7 of Sulfolobus acidocaldarius (strain ATCC 33909 / DSM 639 / JCM 8929 / NBRC 15157 / NCIMB 11770).